The sequence spans 624 residues: Chaperone protein HtpG (624 aa).

Positions 1–336 (MKGQETRGFQ…SSDLPLNVSR (336 aa)) are a; substrate-binding. The tract at residues 337 to 552 (EILQDSTVTR…ADEMSTQMAK (216 aa)) is b. Residues 553–624 (LFAAAGQKVP…IRRMNQLLVS (72 aa)) form a c region.

The protein belongs to the heat shock protein 90 family. In terms of assembly, homodimer.

The protein resides in the cytoplasm. Functionally, molecular chaperone. Has ATPase activity. In Shigella boydii serotype 4 (strain Sb227), this protein is Chaperone protein HtpG.